The chain runs to 161 residues: Small ribosomal subunit protein uS9 (161 aa).

It belongs to the universal ribosomal protein uS9 family.

The polypeptide is Small ribosomal subunit protein uS9 (Rickettsia typhi (strain ATCC VR-144 / Wilmington)).